The chain runs to 133 residues: MARVKRGVTAHAKHKKVLKAAKGFYGRRKNTIRIAKQAVEKSLQYAYRDRKNRKRNFRALWIQRINAATREHGLTYGRFIDGLNKAGIEIDRKVLADMAVHEPQAFAALVAKSKASLEYLKNTTPNAFESAVA.

This sequence belongs to the bacterial ribosomal protein bL20 family.

In terms of biological role, binds directly to 23S ribosomal RNA and is necessary for the in vitro assembly process of the 50S ribosomal subunit. It is not involved in the protein synthesizing functions of that subunit. The protein is Large ribosomal subunit protein bL20 of Chelativorans sp. (strain BNC1).